The primary structure comprises 846 residues: Translation initiation factor IF-2 (846 aa).

A disordered region spans residues 198-219; the sequence is YKREEEEKKSKAKKAGGKGFKK. Positions 207-219 are enriched in basic residues; the sequence is SKAKKAGGKGFKK. The region spanning 345–512 is the tr-type G domain; that stretch reads SRAPVVTIMG…AVLLQSEVLE (168 aa). The G1 stretch occupies residues 354-361; the sequence is GHVDHGKT. GTP is bound at residue 354–361; the sequence is GHVDHGKT. The segment at 379-383 is G2; the sequence is GITQH. Residues 400 to 403 are G3; the sequence is DTPG. Residues 400–404 and 454–457 contribute to the GTP site; these read DTPGH and NKID. A G4 region spans residues 454-457; the sequence is NKID. The segment at 490–492 is G5; it reads SAK.

It belongs to the TRAFAC class translation factor GTPase superfamily. Classic translation factor GTPase family. IF-2 subfamily.

Its subcellular location is the cytoplasm. Its function is as follows. One of the essential components for the initiation of protein synthesis. Protects formylmethionyl-tRNA from spontaneous hydrolysis and promotes its binding to the 30S ribosomal subunits. Also involved in the hydrolysis of GTP during the formation of the 70S ribosomal complex. This chain is Translation initiation factor IF-2, found in Francisella tularensis subsp. holarctica (strain OSU18).